Consider the following 166-residue polypeptide: NADH-ubiquinone oxidoreductase chain 6 (166 aa).

The next 5 membrane-spanning stretches (helical) occupy residues 1-21, 26-46, 47-67, 87-107, and 139-159; these read MMYF…AFAS, IYGG…VVSL, GGSF…LVVF, VFTN…YFSG, and CGGW…FVVL.

This sequence belongs to the complex I subunit 6 family. As to quaternary structure, core subunit of respiratory chain NADH dehydrogenase (Complex I) which is composed of 45 different subunits.

The protein localises to the mitochondrion inner membrane. The enzyme catalyses a ubiquinone + NADH + 5 H(+)(in) = a ubiquinol + NAD(+) + 4 H(+)(out). Core subunit of the mitochondrial membrane respiratory chain NADH dehydrogenase (Complex I) which catalyzes electron transfer from NADH through the respiratory chain, using ubiquinone as an electron acceptor. Essential for the catalytic activity and assembly of complex I. In Ornithorhynchus anatinus (Duckbill platypus), this protein is NADH-ubiquinone oxidoreductase chain 6 (MT-ND6).